The chain runs to 80 residues: DNA-binding protein S1FA2 (80 aa).

The short motif at proline 54–lysine 59 is the Nuclear localization signal element. Over residues proline 55–lysine 70 the composition is skewed to basic residues. Residues proline 55–glutamate 80 form a disordered region.

This sequence belongs to the S1FA transcription factor family.

It is found in the nucleus. Its function is as follows. DNA-binding protein that specifically recognizes a negative element (S1F) within the RPS1 promoter. This chain is DNA-binding protein S1FA2 (S1FA2), found in Oryza sativa subsp. japonica (Rice).